Consider the following 948-residue polypeptide: Probable DNA-directed RNA polymerase (948 aa).

Active-site residues include Asp-600, Lys-680, and Asp-853.

Belongs to the phage and mitochondrial RNA polymerase family.

It localises to the mitochondrion. It catalyses the reaction RNA(n) + a ribonucleoside 5'-triphosphate = RNA(n+1) + diphosphate. Its function is as follows. DNA-dependent RNA polymerase catalyzes the transcription of DNA into RNA using the four ribonucleoside triphosphates as substrates. This Podospora anserina (Pleurage anserina) protein is Probable DNA-directed RNA polymerase.